A 166-amino-acid polypeptide reads, in one-letter code: uncharacterized protein (166 aa).

To M.jannaschii MJ0992.

This is an uncharacterized protein from Methanocaldococcus jannaschii (strain ATCC 43067 / DSM 2661 / JAL-1 / JCM 10045 / NBRC 100440) (Methanococcus jannaschii).